Reading from the N-terminus, the 220-residue chain is Probable L-serine dehydratase, beta chain (220 aa).

In terms of domain architecture, ACT spans 148 to 220 (AILVVHNDKF…NIIQVTKIAD (73 aa)).

Belongs to the iron-sulfur dependent L-serine dehydratase family. In terms of assembly, heterodimer of an alpha chain and a beta chain. The cofactor is [4Fe-4S] cluster.

It catalyses the reaction L-serine = pyruvate + NH4(+). The protein operates within carbohydrate biosynthesis; gluconeogenesis. The protein is Probable L-serine dehydratase, beta chain (sdaAB) of Bacillus subtilis (strain 168).